A 756-amino-acid polypeptide reads, in one-letter code: Polyribonucleotide nucleotidyltransferase (756 aa).

Positions 532 and 538 each coordinate Mg(2+). A KH domain is found at 598–657; that stretch reads PRVTAIKVPVDKIGEVIGPKGKMINSITEQTGANISIEDDGTVFVGATDGPSAQAAIDMI. One can recognise an S1 motif domain in the interval 669-738; that stretch reads GERFLGTVVK…ARGKISLIPV (70 aa).

This sequence belongs to the polyribonucleotide nucleotidyltransferase family. Requires Mg(2+) as cofactor.

It localises to the cytoplasm. The catalysed reaction is RNA(n+1) + phosphate = RNA(n) + a ribonucleoside 5'-diphosphate. Its function is as follows. Involved in mRNA degradation. Catalyzes the phosphorolysis of single-stranded polyribonucleotides processively in the 3'- to 5'-direction. This is Polyribonucleotide nucleotidyltransferase from Rhodococcus erythropolis (strain PR4 / NBRC 100887).